A 230-amino-acid polypeptide reads, in one-letter code: Demethylmenaquinone methyltransferase (230 aa).

Residues Thr57, Asp77, 101–102, and Ser118 each bind S-adenosyl-L-methionine; that span reads DI.

Belongs to the class I-like SAM-binding methyltransferase superfamily. MenG/UbiE family.

It catalyses the reaction a 2-demethylmenaquinol + S-adenosyl-L-methionine = a menaquinol + S-adenosyl-L-homocysteine + H(+). The protein operates within quinol/quinone metabolism; menaquinone biosynthesis; menaquinol from 1,4-dihydroxy-2-naphthoate: step 2/2. In terms of biological role, methyltransferase required for the conversion of demethylmenaquinol (DMKH2) to menaquinol (MKH2). In Chlamydia caviae (strain ATCC VR-813 / DSM 19441 / 03DC25 / GPIC) (Chlamydophila caviae), this protein is Demethylmenaquinone methyltransferase.